We begin with the raw amino-acid sequence, 353 residues long: DNA polymerase IV (353 aa).

In terms of domain architecture, UmuC spans 6 to 187 (IIHIDCDCFY…LPVTKLHGVG (182 aa)). Mg(2+) contacts are provided by Asp-10 and Asp-105. The active site involves Glu-106.

This sequence belongs to the DNA polymerase type-Y family. Monomer. Mg(2+) serves as cofactor.

It is found in the cytoplasm. The enzyme catalyses DNA(n) + a 2'-deoxyribonucleoside 5'-triphosphate = DNA(n+1) + diphosphate. Poorly processive, error-prone DNA polymerase involved in untargeted mutagenesis. Copies undamaged DNA at stalled replication forks, which arise in vivo from mismatched or misaligned primer ends. These misaligned primers can be extended by PolIV. Exhibits no 3'-5' exonuclease (proofreading) activity. May be involved in translesional synthesis, in conjunction with the beta clamp from PolIII. The chain is DNA polymerase IV from Pseudomonas savastanoi pv. phaseolicola (strain 1448A / Race 6) (Pseudomonas syringae pv. phaseolicola (strain 1448A / Race 6)).